We begin with the raw amino-acid sequence, 385 residues long: Cytochrome b (385 aa).

Helical transmembrane passes span 32–52, 76–98, 113–133, and 179–199; these read FGSLLGLCLGIQIITGVTLAM, WLIRYLHSNTASAFFFLVYLHIG, AWILGVIILILMMGIGFLGYV, and FFALHFVLPFVLAALVIMHLI. Residues H82 and H96 each coordinate heme b. Heme b contacts are provided by H183 and H197. A ubiquinone is bound at residue H202. 4 helical membrane passes run 226 to 246, 290 to 310, 322 to 342, and 349 to 369; these read YLFKDLITIFLFMFGLSIFVF, LLGVIAMFASLVILMVLPKTD, LSKIAFYLFVTNFLLLLQLGA, and FIEFGQISTALYFAYYLIIMP.

This sequence belongs to the cytochrome b family. In terms of assembly, fungal cytochrome b-c1 complex contains 10 subunits; 3 respiratory subunits, 2 core proteins and 5 low-molecular weight proteins. Cytochrome b-c1 complex is a homodimer. Heme b serves as cofactor.

The protein localises to the mitochondrion inner membrane. Its function is as follows. Component of the ubiquinol-cytochrome c reductase complex (complex III or cytochrome b-c1 complex) that is part of the mitochondrial respiratory chain. The b-c1 complex mediates electron transfer from ubiquinol to cytochrome c. Contributes to the generation of a proton gradient across the mitochondrial membrane that is then used for ATP synthesis. The chain is Cytochrome b (cob) from Akanthomyces muscarius (Entomopathogenic fungus).